We begin with the raw amino-acid sequence, 334 residues long: N-acetyl-gamma-glutamyl-phosphate reductase (334 aa).

The active site involves cysteine 154.

It belongs to the NAGSA dehydrogenase family. Type 1 subfamily.

Its subcellular location is the cytoplasm. It catalyses the reaction N-acetyl-L-glutamate 5-semialdehyde + phosphate + NADP(+) = N-acetyl-L-glutamyl 5-phosphate + NADPH + H(+). The protein operates within amino-acid biosynthesis; L-arginine biosynthesis; N(2)-acetyl-L-ornithine from L-glutamate: step 3/4. Catalyzes the NADPH-dependent reduction of N-acetyl-5-glutamyl phosphate to yield N-acetyl-L-glutamate 5-semialdehyde. The protein is N-acetyl-gamma-glutamyl-phosphate reductase of Vibrio parahaemolyticus serotype O3:K6 (strain RIMD 2210633).